A 451-amino-acid polypeptide reads, in one-letter code: Adenylyltransferase and sulfurtransferase MOCS3-1 (451 aa).

The disordered stretch occupies residues 42–62; that stretch reads GEDSDEAEESSNDMPTPQTKL. The span at 43 to 52 shows a compositional bias: acidic residues; it reads EDSDEAEESS. The residue at position 60 (threonine 60) is a Phosphothreonine. ATP-binding positions include glycine 99, aspartate 120, 127–131, lysine 144, and 188–189; these read SNLHR and DN. The Zn(2+) site is built by cysteine 229 and cysteine 232. The Glycyl thioester intermediate; for adenylyltransferase activity role is filled by cysteine 246. Residues cysteine 304 and cysteine 307 each coordinate Zn(2+). A Rhodanese domain is found at 353 to 449; it reads QSQPHLLLDV…WTGSVDATFP (97 aa). The active-site Cysteine persulfide intermediate; for sulfurtransferase activity is the cysteine 408.

The protein in the N-terminal section; belongs to the HesA/MoeB/ThiF family. UBA4 subfamily. The cofactor is Zn(2+).

The protein localises to the cytoplasm. It catalyses the reaction [molybdopterin-synthase sulfur-carrier protein]-C-terminal Gly-Gly + ATP + H(+) = [molybdopterin-synthase sulfur-carrier protein]-C-terminal Gly-Gly-AMP + diphosphate. The enzyme catalyses [molybdopterin-synthase sulfur-carrier protein]-C-terminal Gly-Gly-AMP + S-sulfanyl-L-cysteinyl-[cysteine desulfurase] + AH2 = [molybdopterin-synthase sulfur-carrier protein]-C-terminal-Gly-aminoethanethioate + L-cysteinyl-[cysteine desulfurase] + A + AMP + 2 H(+). It functions in the pathway tRNA modification; 5-methoxycarbonylmethyl-2-thiouridine-tRNA biosynthesis. It participates in cofactor biosynthesis; molybdopterin biosynthesis. Plays a central role in 2-thiolation of mcm(5)S(2)U at tRNA wobble positions of cytosolic tRNA(Lys), tRNA(Glu) and tRNA(Gln). Also essential during biosynthesis of the molybdenum cofactor. Acts by mediating the C-terminal thiocarboxylation of sulfur carriers URM1 and MOCS2A. Its N-terminus first activates URM1 and MOCS2A as acyl-adenylates (-COAMP), then the persulfide sulfur on the catalytic cysteine is transferred to URM1 and MOCS2A to form thiocarboxylation (-COSH) of their C-terminus. The reaction probably involves hydrogen sulfide that is generated from the persulfide intermediate and that acts as a nucleophile towards URM1 and MOCS2A. Subsequently, a transient disulfide bond is formed. Does not use thiosulfate as sulfur donor; NFS1 probably acting as a sulfur donor for thiocarboxylation reactions. This is Adenylyltransferase and sulfurtransferase MOCS3-1 from Drosophila pseudoobscura pseudoobscura (Fruit fly).